We begin with the raw amino-acid sequence, 249 residues long: Pleckstrin homology domain-containing family F member 2 (249 aa).

The 97-residue stretch at 35 to 131 folds into the PH domain; sequence VLIGEGVLTK…WMNHINKCVS (97 aa). The FYVE-type zinc finger occupies 152 to 212; sequence DSEATVCMRC…ICDSCYDLLS (61 aa). 8 residues coordinate Zn(2+): Cys-158, Cys-161, Cys-175, Cys-178, Cys-183, Cys-186, Cys-204, and Cys-207. The span at 219-232 shows a compositional bias: polar residues; sequence CQSTRSDSYSQSPK. Positions 219–249 are disordered; sequence CQSTRSDSYSQSPKSSLNDASDDDDDEDSSD. A compositionally biased stretch (acidic residues) spans 238 to 249; sequence ASDDDDDEDSSD.

It is found in the early endosome membrane. The protein resides in the endoplasmic reticulum. May play a role in early endosome fusion upstream of RAB5, hence regulating receptor trafficking and fluid-phase transport. Enhances cellular sensitivity to TNF-induced apoptosis. The sequence is that of Pleckstrin homology domain-containing family F member 2 (PLEKHF2) from Gallus gallus (Chicken).